The chain runs to 731 residues: 1,4-alpha-glucan branching enzyme GlgB 2 (731 aa).

The Nucleophile role is filled by aspartate 410. The active-site Proton donor is the glutamate 463.

This sequence belongs to the glycosyl hydrolase 13 family. GlgB subfamily. As to quaternary structure, monomer.

The enzyme catalyses Transfers a segment of a (1-&gt;4)-alpha-D-glucan chain to a primary hydroxy group in a similar glucan chain.. The protein operates within glycan biosynthesis; glycogen biosynthesis. Catalyzes the formation of the alpha-1,6-glucosidic linkages in glycogen by scission of a 1,4-alpha-linked oligosaccharide from growing alpha-1,4-glucan chains and the subsequent attachment of the oligosaccharide to the alpha-1,6 position. The protein is 1,4-alpha-glucan branching enzyme GlgB 2 of Xanthomonas oryzae pv. oryzae (strain MAFF 311018).